Reading from the N-terminus, the 726-residue chain is Dipeptidyl-peptidase 5 (726 aa).

An N-terminal signal peptide occupies residues 1–19; sequence MAAAKWLIASLAFASSGLA. N-linked (GlcNAc...) asparagine glycosylation is found at Asn96 and Asn252. Residues 269 to 291 are disordered; the sequence is AEPINKRNGPRTPQGIEGASSSP. The active-site Charge relay system is the Ser558. Residues Asn605 and Asn638 are each glycosylated (N-linked (GlcNAc...) asparagine). Residues Asp641 and His673 each act as charge relay system in the active site. Residue Asn699 is glycosylated (N-linked (GlcNAc...) asparagine).

The protein belongs to the peptidase S9C family.

It localises to the secreted. The chain is Dipeptidyl-peptidase 5 (DPPV) from Trichophyton schoenleinii.